We begin with the raw amino-acid sequence, 331 residues long: Protein REVEILLE 6 (331 aa).

The 55-residue stretch at 67–121 (TITKSRESWTEPEHDKFLEALQLFDRDWKKIEAFIGSKTVIQIRSHAQKYFLKVQ) folds into the HTH myb-type domain. The H-T-H motif DNA-binding region spans 94-117 (WKKIEAFIGSKTVIQIRSHAQKYF). Disordered regions lie at residues 122-166 (KSGT…EPND), 203-237 (LPKAGAGANNNCSSSSENTPRPRSNRDARDHGNVG), and 309-331 (SETATDHGGVNKTLNKDPPEIST). A compositionally biased stretch (polar residues) spans 150–165 (VQLQVPGSFKSTSEPN). Over residues 211 to 220 (NNNCSSSSEN) the composition is skewed to low complexity. 2 stretches are compositionally biased toward basic and acidic residues: residues 226 to 235 (SNRDARDHGN) and 322 to 331 (LNKDPPEIST).

It is found in the nucleus. Functionally, probable transcription factor. RVE4, RVE6 and RVE8 are components of the circadian system acting synergistically to regulate flowering time, redundantly to regulate leaf growth, and antagonistically to regulate hypocotyl elongation; their action seems independent of ZTL and HY5. In Arabidopsis thaliana (Mouse-ear cress), this protein is Protein REVEILLE 6.